Consider the following 286-residue polypeptide: UPF0761 membrane protein KPN78578_41360 (286 aa).

7 helical membrane passes run 44-64 (LLSL…FPMF), 74-94 (FIFA…IEQF), 104-124 (VGAF…DSAL), 140-160 (FAVY…SLAI), 183-203 (LFPL…VPTT), 210-230 (AVIG…AFAL), and 244-264 (VISV…IVLL).

This sequence belongs to the UPF0761 family.

The protein resides in the cell inner membrane. In Klebsiella pneumoniae subsp. pneumoniae (strain ATCC 700721 / MGH 78578), this protein is UPF0761 membrane protein KPN78578_41360.